A 262-amino-acid chain; its full sequence is MARGLKKHLKRLNAPKHWMLDKLGGAFAPKPSSGPHKSRECLPLVLIIRNRLKYALTYREVISILMQRHIQVDGKVRTDKTYPAGFMDVVSIPKTNENFRLLYDTKGRFRLHSIKDEEAKFKLCKVRSIQFGQKGIPYLNTYDGRTIRYPDPLIKPNDTIKLDLEANKIVEFIKFDVGNVVMVTGGRNRGRVGVIKNREKHKGSFETIHIQDSTGHEFATRLGNVYTIGKGTKPWVSLPKGKGIKLTIIEEARKRLASQQAA.

The 63-residue stretch at 42–104 (LPLVLIIRNR…TNENFRLLYD (63 aa)) folds into the S4 RNA-binding domain.

The protein belongs to the eukaryotic ribosomal protein eS4 family.

The protein localises to the cytoplasm. This Arabidopsis thaliana (Mouse-ear cress) protein is Small ribosomal subunit protein eS4x (RPS4D).